The sequence spans 118 residues: uncharacterized protein (118 aa).

This is an uncharacterized protein from Methanocaldococcus jannaschii (strain ATCC 43067 / DSM 2661 / JAL-1 / JCM 10045 / NBRC 100440) (Methanococcus jannaschii).